Consider the following 260-residue polypeptide: Acetylglutamate kinase (260 aa).

Residues 45–46 (GG), arginine 67, and asparagine 159 each bind substrate.

Belongs to the acetylglutamate kinase family. ArgB subfamily.

It localises to the cytoplasm. The catalysed reaction is N-acetyl-L-glutamate + ATP = N-acetyl-L-glutamyl 5-phosphate + ADP. It participates in amino-acid biosynthesis; L-arginine biosynthesis; N(2)-acetyl-L-ornithine from L-glutamate: step 2/4. Its function is as follows. Catalyzes the ATP-dependent phosphorylation of N-acetyl-L-glutamate. This Colwellia psychrerythraea (strain 34H / ATCC BAA-681) (Vibrio psychroerythus) protein is Acetylglutamate kinase.